The sequence spans 155 residues: DNA polymerase epsilon subunit 4 (155 aa).

Composition is skewed to acidic residues over residues 1–16 (MASEELFEAEFSEEQD) and 24–48 (ETEEAELAETEEPLEITEESPDNPE). Residues 1-76 (MASEELFEAE…APADNEAKMT (76 aa)) form a disordered region. A compositionally biased stretch (polar residues) spans 49–65 (AESTTEQLTEKPVTNGN).

In terms of assembly, component of the DNA polymerase epsilon complex consisting of four subunits: the catalytic subunit PolE1/DNApol-epsilon255 and the accessory subunits PolE2/DNApol-epsilon58, Chrac-14/DNApolE3 and PolE4/Mes4.

The protein resides in the nucleus. Accessory component of the DNA polymerase epsilon complex. Participates in DNA repair and in chromosomal DNA replication. Has a role in cell cycle progression. Required for wing morphogenesis. The chain is DNA polymerase epsilon subunit 4 from Drosophila melanogaster (Fruit fly).